The following is a 360-amino-acid chain: Phosphoserine aminotransferase (360 aa).

An L-glutamate-binding site is contributed by Arg-43. Pyridoxal 5'-phosphate is bound by residues 77 to 78 (AS), Trp-103, Thr-152, Asp-172, and Gln-195. The residue at position 196 (Lys-196) is an N6-(pyridoxal phosphate)lysine. Pyridoxal 5'-phosphate is bound at residue 237 to 238 (NT).

It belongs to the class-V pyridoxal-phosphate-dependent aminotransferase family. SerC subfamily. In terms of assembly, homodimer. Requires pyridoxal 5'-phosphate as cofactor.

The protein localises to the cytoplasm. It carries out the reaction O-phospho-L-serine + 2-oxoglutarate = 3-phosphooxypyruvate + L-glutamate. It catalyses the reaction 4-(phosphooxy)-L-threonine + 2-oxoglutarate = (R)-3-hydroxy-2-oxo-4-phosphooxybutanoate + L-glutamate. Its pathway is amino-acid biosynthesis; L-serine biosynthesis; L-serine from 3-phospho-D-glycerate: step 2/3. It functions in the pathway cofactor biosynthesis; pyridoxine 5'-phosphate biosynthesis; pyridoxine 5'-phosphate from D-erythrose 4-phosphate: step 3/5. In terms of biological role, catalyzes the reversible conversion of 3-phosphohydroxypyruvate to phosphoserine and of 3-hydroxy-2-oxo-4-phosphonooxybutanoate to phosphohydroxythreonine. The sequence is that of Phosphoserine aminotransferase from Syntrophobacter fumaroxidans (strain DSM 10017 / MPOB).